The primary structure comprises 662 residues: Protein Aster-C (662 aa).

The interval 1–34 (MEGAPTVRQVMNEGDSSLATDLQEDVEENPSPTV) is disordered. One can recognise a GRAM domain in the interval 69 to 136 (EEYRRQFTHL…KNITFMTKEK (68 aa)). 2 disordered regions span residues 212-237 (SIEDVQPRSPGRSSLDDSGERDEKLS) and 249-284 (RVSETESFDGNSSKGGLGKEESQNEKQTKKSLLPTL). The segment covering 265 to 276 (LGKEESQNEKQT) has biased composition (basic and acidic residues). Residues 326 to 497 (HGRLFINRIF…DLLIEESVLN (172 aa)) form the VASt domain. The helical transmembrane segment at 557–577 (LIVVMSIFVLLLVLLNVTLFL) threads the bilayer.

The protein resides in the endoplasmic reticulum membrane. It is found in the cell membrane. Functionally, cholesterol transporter that mediates non-vesicular transport of cholesterol from the plasma membrane (PM) to the endoplasmic reticulum (ER). Contains unique domains for binding cholesterol and the PM, thereby serving as a molecular bridge for the transfer of cholesterol from the PM to the ER. Plays a crucial role in cholesterol homeostasis and has the unique ability to localize to the PM based on the level of membrane cholesterol. In lipid-poor conditions localizes to the ER membrane and in response to excess cholesterol in the PM is recruited to the endoplasmic reticulum-plasma membrane contact sites (EPCS) which is mediated by the GRAM domain. At the EPCS, the sterol-binding VASt/ASTER domain binds to the cholesterol in the PM and facilitates its transfer from the PM to ER. This Homo sapiens (Human) protein is Protein Aster-C (GRAMD1C).